Consider the following 1813-residue polypeptide: Latent-transforming growth factor beta-binding protein 2 (1813 aa).

A signal peptide spans 1 to 35; that stretch reads MRAPTTARCSGCIQRVRWRGFLPLVLAVLMGTSHA. The segment at 94–115 is heparin-binding; it reads NPGWLAEAEARRPPRTQQLRRV. The segment at 103 to 152 is disordered; that stretch reads ARRPPRTQQLRRVQPPVQTRRSHPRGQQQIAARAAPSVARLETPQRPAAA. The span at 108-132 shows a compositional bias: polar residues; the sequence is RTQQLRRVQPPVQTRRSHPRGQQQI. N175 carries N-linked (GlcNAc...) asparagine glycosylation. Residues 181 to 213 enclose the EGF-like 1 domain; it reads IKPVCQPPCQNRGSCSRPQVCICRSGFRGARCE. 3 cysteine pairs are disulfide-bonded: C185–C195, C189–C201, and C203–C212. A disordered region spans residues 220 to 305; it reads EFDPQNARPV…QLMSNALPSG (86 aa). The heparin-binding stretch occupies residues 226–243; sequence ARPVPRRSVERAPGPHRS. A compositionally biased stretch (pro residues) spans 257–266; it reads LVPPPSPPPS. Polar residues predominate over residues 293–302; the sequence is ANGQLMSNAL. N328 carries N-linked (GlcNAc...) asparagine glycosylation. 329–339 serves as a coordination point for heparin; it reads LTEKIKKIKVV. The 33-residue stretch at 381-413 folds into the EGF-like 2 domain; the sequence is RIYFCQIPCLNGGRCIGRDECWCPANSTGKFCH. 3 cysteine pairs are disulfide-bonded: C385–C395, C389–C401, and C403–C412. N-linked (GlcNAc...) asparagine glycosylation occurs at N406. At S491 the chain carries Phosphoserine. The tract at residues 492 to 524 is disordered; sequence VETRASHRPHGNLGHSPWASNSIPARAGEAPRP. The 53-residue stretch at 536–588 folds into the TB 1 domain; it reads GQCYLSTVNGQCANPLGSLTSQEDCCGSVGTFWGVTSCAPCPPRQEGPAFPVI. Intrachain disulfides connect C538/C560, C547/C573, and C561/C576. N603 carries an N-linked (GlcNAc...) asparagine glycan. Positions 609-649 constitute an EGF-like 3; calcium-binding domain; that stretch reads DINECLTLGLCKDSECVNTRGSYLCTCRPGLMLDPSRSRCV. 7 disulfides stabilise this stretch: C613–C624, C619–C633, C635–C648, C661–C683, C670–C696, C684–C699, and C685–C711. The region spanning 659–711 is the TB 2 domain; that stretch reads GLCYRSLGSGTCTLPLVHRITKQICCCSRVGKAWGSTCEQCPLPGTEAFREIC. 2 disordered regions span residues 730–761 and 787–819; these read KAEE…QPLR and SAPH…PAEE. The 43-residue stretch at 835 to 877 folds into the EGF-like 4 domain; the sequence is DFDPCFAGASNICGPGTCVSLPNGYRCVCSPGYQLHPSQDYCT. Cystine bridges form between C839–C852, C847–C861, C863–C876, C882–C893, C887–C902, C904–C919, C925–C936, C931–C945, C947–C959, C965–C976, C971–C985, C988–C999, C1005–C1016, C1011–C1025, C1027–C1040, C1046–C1057, C1052–C1066, C1069–C1082, C1088–C1099, C1094–C1108, C1111–C1124, C1130–C1142, C1137–C1151, C1153–C1165, C1171–C1183, C1177–C1192, C1194–C1207, C1213–C1224, C1219–C1233, C1235–C1249, C1255–C1268, C1263–C1277, C1281–C1293, C1299–C1311, C1305–C1320, C1322–C1335, C1341–C1353, C1348–C1362, C1364–C1378, C1405–C1428, C1415–C1440, C1429–C1443, C1430–C1455, C1481–C1494, C1489–C1503, C1505–C1518, C1524–C1534, C1529–C1543, and C1545–C1558. One can recognise an EGF-like 5; calcium-binding domain in the interval 878–920; the sequence is DDNECMRNPCEGRGRCVNSVGSYSCLCYPGYTLVTLGDTQECQ. Residues 921-960 form the EGF-like 6; calcium-binding domain; that stretch reads DIDECEQPGVCSGGRCSNTEGSYHCECDRGYIMVRKGHCQ. An EGF-like 7; calcium-binding domain is found at 961–1000; that stretch reads DINECRHPGTCPDGRCVNSPGSYTCLACEEGYVGQSGSCV. The EGF-like 8; calcium-binding domain occupies 1001–1041; the sequence is DVNECLTPGICTHGRCINMEGSFRCSCEPGYEVTPDKKGCR. The region spanning 1042 to 1083 is the EGF-like 9; calcium-binding domain; sequence DVDECASRASCPTGLCLNTEGSFTCSACQSGYWVNEDGTACE. Positions 1084 to 1125 constitute an EGF-like 10; calcium-binding domain; it reads DLDECAFPGVCPTGVCTNTVGSFSCKDCDQGYRPNPLGNRCE. Residues 1126 to 1166 form the EGF-like 11; calcium-binding domain; it reads DVDECEGPQSSCRGGECKNTEGSYQCLCHQGFQLVNGTMCE. N1161 carries an N-linked (GlcNAc...) asparagine glycan. The 42-residue stretch at 1167-1208 folds into the EGF-like 12; calcium-binding domain; that stretch reads DVNECVGEEHCAPHGECLNSLGSFFCLCAPGFASAEGGTRCQ. The EGF-like 13; calcium-binding domain occupies 1209 to 1250; sequence DVDECAATDPCPGGHCVNTEGSFSCLCETASFQPSPDSGECL. The EGF-like 14; calcium-binding domain maps to 1251–1294; sequence DIDECEDREDPVCGAWRCENSPGSYRCILDCQPGFYVAPNGDCI. Residues 1295–1336 form the EGF-like 15; calcium-binding domain; sequence DIDECANDTVCGNHGFCDNTDGSFRCLCDQGFETSPSGWECV. A glycan (N-linked (GlcNAc...) asparagine) is linked at N1301. Residues 1337–1379 enclose the EGF-like 16; calcium-binding domain; it reads DVNECELMMAVCGDALCENVEGSFLCLCASDLEEYDAEEGHCR. Positions 1403-1455 constitute a TB 3 domain; that stretch reads MECYSEHNGGPPCSQILGQNSTQAECCCTQGARWGKACAPCPSEDSVEFSQLC. N-linked (GlcNAc...) asparagine glycosylation is present at N1422. One can recognise an EGF-like 17; calcium-binding domain in the interval 1477-1519; it reads DADECVLFGPALCQNGRCSNIVPGYICLCNPGYHYDASSRKCQ. The region spanning 1520–1559 is the EGF-like 18; calcium-binding domain; it reads DHNECQDLACENGECVNQEGSFHCLCNPPLTLDLSGQRCV. N1560 is a glycosylation site (N-linked (GlcNAc...) asparagine). The TB 4 domain maps to 1576-1628; that stretch reads DICWKKVTNDVCSQPLRGHHTTYTECCCQDGEAWSQQCALCPPRSSEVYAQLC. 4 cysteine pairs are disulfide-bonded: C1578-C1601, C1587-C1613, C1602-C1616, and C1603-C1628. The C-terminal domain stretch occupies residues 1631–1813; that stretch reads ARIEAERGAG…PGPPHCAAKE (183 aa). Residues 1671-1717 form a disordered region; the sequence is YLGPEDTAPEPPFSNPASQPGDNTPVLEPPLQPSELQPHYLASHSEP. Positions 1725 to 1765 constitute an EGF-like 19; calcium-binding domain; sequence QAEECGILNGCENGRCVRVREGYTCDCFEGFQLDAPTLACV. 6 disulfides stabilise this stretch: C1729-C1740, C1735-C1749, C1751-C1764, C1770-C1785, C1780-C1794, and C1796-C1809. The EGF-like 20; calcium-binding domain occupies 1766–1810; that stretch reads DVNECEDLNGPARLCAHGHCENTEGSYRCHCSPGYVAEPGPPHCA.

This sequence belongs to the LTBP family. Forms part of the large latent transforming growth factor beta precursor complex; removal is essential for activation of complex. Interacts with SDC4. Interacts (via C-terminal domain) with FBN1 (via N-terminal domain) in a Ca(+2)-dependent manner. N-Glycosylated. Post-translationally, contains hydroxylated asparagine residues. As to expression, expressed in the anterior chamber of the eye.

It localises to the secreted. It is found in the extracellular space. Its subcellular location is the extracellular matrix. Functionally, may play an integral structural role in elastic-fiber architectural organization and/or assembly. The polypeptide is Latent-transforming growth factor beta-binding protein 2 (Ltbp2) (Mus musculus (Mouse)).